The following is a 614-amino-acid chain: UvrABC system protein C (614 aa).

The GIY-YIG domain maps to 14–91 (TSPGCYIHKD…IKENKPKYNI (78 aa)). The region spanning 196 to 231 (NKIIDELKGKMAAAAQTMEFERAAEYRDLIQAIGTL) is the UVR domain. The interval 595 to 614 (LPQVAEERVDYQTEGNHNKP) is disordered.

Belongs to the UvrC family. Interacts with UvrB in an incision complex.

It localises to the cytoplasm. The UvrABC repair system catalyzes the recognition and processing of DNA lesions. UvrC both incises the 5' and 3' sides of the lesion. The N-terminal half is responsible for the 3' incision and the C-terminal half is responsible for the 5' incision. In Streptococcus pneumoniae (strain Taiwan19F-14), this protein is UvrABC system protein C.